A 440-amino-acid chain; its full sequence is Trigger factor (440 aa).

The PPIase FKBP-type domain occupies 163-248 (GDILTVDFLG…AKALKRRVAP (86 aa)).

The protein belongs to the FKBP-type PPIase family. Tig subfamily.

It localises to the cytoplasm. The enzyme catalyses [protein]-peptidylproline (omega=180) = [protein]-peptidylproline (omega=0). Functionally, involved in protein export. Acts as a chaperone by maintaining the newly synthesized protein in an open conformation. Functions as a peptidyl-prolyl cis-trans isomerase. This chain is Trigger factor, found in Acidiphilium cryptum (strain JF-5).